Reading from the N-terminus, the 181-residue chain is ADP-ribosylation factor 1 (181 aa).

G2 carries the N-myristoyl glycine lipid modification. Residues 24–31 (GLDAAGKT), 67–71 (DVGGQ), and 126–129 (NKQD) each bind GTP.

This sequence belongs to the small GTPase superfamily. Arf family. In terms of assembly, interacts with AGD7 and GDAP1. GDP-locked form interacts with cytosolic tail of p24 proteins. Interacts with AGD5 at trans-Golgi network. Interacts with A.tumefaciens AK6b.

The protein localises to the golgi apparatus. The protein resides in the endosome. Its subcellular location is the trans-Golgi network. It localises to the early endosome. The enzyme catalyses GTP + H2O = GDP + phosphate + H(+). Its activity is regulated as follows. Activated by AGD7 and AGD10. In terms of biological role, GTP-binding protein involved in protein trafficking; required for the sequence-specific vacuolar sorting route to the lytic vacuole, for the ER-to-Golgi transport and for the Golgi-derived transport to the plasma membrane. Involved in the recruitment of COPI and GDAP1 to membranes. Required for recycling of PIN auxin transporters (e.g. PIN1 and PIN2) in a fungal toxin brefeldin A (BFA)-dependent manner. Involved in various auxin-dependent developmental processes. The protein is ADP-ribosylation factor 1 of Arabidopsis thaliana (Mouse-ear cress).